A 250-amino-acid polypeptide reads, in one-letter code: ATP synthase subunit a (250 aa).

6 helical membrane-spanning segments follow: residues 27–47, 85–105, 115–135, 141–161, 181–201, and 223–243; these read FTNA…FLTF, FFPL…VGLI, LIVT…YGFV, FLHL…LVVI, MLAG…LASA, and ELLV…IYLN.

It belongs to the ATPase A chain family. As to quaternary structure, F-type ATPases have 2 components, CF(1) - the catalytic core - and CF(0) - the membrane proton channel. CF(1) has five subunits: alpha(3), beta(3), gamma(1), delta(1), epsilon(1). CF(0) has three main subunits: a(1), b(2) and c(9-12). The alpha and beta chains form an alternating ring which encloses part of the gamma chain. CF(1) is attached to CF(0) by a central stalk formed by the gamma and epsilon chains, while a peripheral stalk is formed by the delta and b chains.

It localises to the cell inner membrane. Key component of the proton channel; it plays a direct role in the translocation of protons across the membrane. In Xanthobacter autotrophicus (strain ATCC BAA-1158 / Py2), this protein is ATP synthase subunit a.